The following is a 154-amino-acid chain: Myoglobin (154 aa).

The 147-residue stretch at 2 to 148 (VLSEGEWQLV…FRKDIAAKYK (147 aa)) folds into the Globin domain. The residue at position 4 (S4) is a Phosphoserine. H65 serves as a coordination point for nitrite. Position 65 (H65) interacts with O2. T68 carries the post-translational modification Phosphothreonine. Residue H94 coordinates heme b.

The protein belongs to the globin family. In terms of assembly, monomeric.

The protein localises to the cytoplasm. The protein resides in the sarcoplasm. The catalysed reaction is Fe(III)-heme b-[protein] + nitric oxide + H2O = Fe(II)-heme b-[protein] + nitrite + 2 H(+). It catalyses the reaction H2O2 + AH2 = A + 2 H2O. In terms of biological role, monomeric heme protein which primary function is to store oxygen and facilitate its diffusion within muscle tissues. Reversibly binds oxygen through a pentacoordinated heme iron and enables its timely and efficient release as needed during periods of heightened demand. Depending on the oxidative conditions of tissues and cells, and in addition to its ability to bind oxygen, it also has a nitrite reductase activity whereby it regulates the production of bioactive nitric oxide. Under stress conditions, like hypoxia and anoxia, it also protects cells against reactive oxygen species thanks to its pseudoperoxidase activity. In Physeter macrocephalus (Sperm whale), this protein is Myoglobin (MB).